The primary structure comprises 411 residues: Tyrosine--tRNA ligase (411 aa).

Tyr34 provides a ligand contact to L-tyrosine. The 'HIGH' region signature appears at 39–48 (CTATSLHIGS). L-tyrosine-binding residues include Tyr171 and Gln175. The 'KMSKS' region signature appears at 231–235 (KMGKT). Lys234 is an ATP binding site. Residues 345–411 (ISAYELFHEA…GKKRHILVRV (67 aa)) form the S4 RNA-binding domain.

Belongs to the class-I aminoacyl-tRNA synthetase family. TyrS type 1 subfamily. As to quaternary structure, homodimer.

It is found in the cytoplasm. The enzyme catalyses tRNA(Tyr) + L-tyrosine + ATP = L-tyrosyl-tRNA(Tyr) + AMP + diphosphate + H(+). Catalyzes the attachment of tyrosine to tRNA(Tyr) in a two-step reaction: tyrosine is first activated by ATP to form Tyr-AMP and then transferred to the acceptor end of tRNA(Tyr). The chain is Tyrosine--tRNA ligase from Rickettsia massiliae (strain Mtu5).